The sequence spans 218 residues: uncharacterized protein (218 aa).

Positions 1 to 21 are cleaved as a signal peptide; the sequence is MKKFVYKYSFGALLLLSGLSS. Residue cysteine 22 is the site of N-palmitoyl cysteine attachment. A lipid anchor (S-diacylglycerol cysteine) is attached at cysteine 22.

Belongs to the chlamydial CPn_0875/CT_734/TC_0107 family.

Its subcellular location is the cell membrane. This is an uncharacterized protein from Chlamydia muridarum (strain MoPn / Nigg).